We begin with the raw amino-acid sequence, 189 residues long: UPF0301 protein RMA_0049 (189 aa).

This sequence belongs to the UPF0301 (AlgH) family.

This chain is UPF0301 protein RMA_0049, found in Rickettsia massiliae (strain Mtu5).